The chain runs to 356 residues: NADH-quinone oxidoreductase subunit H (356 aa).

Helical transmembrane passes span 18–38 (IVMVAQSVLLLVVLLIAIAYI), 87–107 (GVFLLAPLVSCVLALAAWAVI), 120–140 (VGILYIFAISSLSIYGIIMGG), 166–186 (IGFVIITVLLCAGSLNLSAIV), 202–222 (WLTFLNWYWLPLLPMFVVFYV), 257–277 (LFMLGEYVAITTMCAMGAILF), 292–312 (WVPGVIWFSLKLFFMFFLIAM), and 333–353 (FLPLSLAMVVIVAAVLQFAGI).

The protein belongs to the complex I subunit 1 family. As to quaternary structure, NDH-1 is composed of 14 different subunits. Subunits NuoA, H, J, K, L, M, N constitute the membrane sector of the complex.

The protein localises to the cell inner membrane. It catalyses the reaction a quinone + NADH + 5 H(+)(in) = a quinol + NAD(+) + 4 H(+)(out). In terms of biological role, NDH-1 shuttles electrons from NADH, via FMN and iron-sulfur (Fe-S) centers, to quinones in the respiratory chain. The immediate electron acceptor for the enzyme in this species is believed to be ubiquinone. Couples the redox reaction to proton translocation (for every two electrons transferred, four hydrogen ions are translocated across the cytoplasmic membrane), and thus conserves the redox energy in a proton gradient. This subunit may bind ubiquinone. The polypeptide is NADH-quinone oxidoreductase subunit H (Nitrobacter winogradskyi (strain ATCC 25391 / DSM 10237 / CIP 104748 / NCIMB 11846 / Nb-255)).